The chain runs to 1143 residues: uncharacterized protein (1143 aa).

Residues Met1 to Gly20 form the signal peptide. Residues Asn21–Ala1121 are Extracellular-facing. Residues Asn177–Gly203 are compositionally biased toward gly residues. The tract at residues Asn177–Ser1120 is disordered. The segment covering Ser222–Trp236 has biased composition (low complexity). The span at Ser237–Ser283 shows a compositional bias: gly residues. Over residues Ser284 to Gly296 the composition is skewed to low complexity. Positions Ser297–Ser330 are enriched in gly residues. A compositionally biased stretch (low complexity) spans Ser331 to Trp368. Over residues Gly374–Ser392 the composition is skewed to gly residues. The span at Ser393 to Gly403 shows a compositional bias: low complexity. 2 stretches are compositionally biased toward gly residues: residues Gly404–Ser418 and Gly430–Ser444. Low complexity-rich tracts occupy residues Ser445–Gly498 and Gly506–Asp541. 6 stretches are compositionally biased toward gly residues: residues Gly555–Ser573, Gly580–Ser596, Gly604–Ser622, Gly629–Ser783, Gly790–Ser843, and Gly851–Ser905. Residues Gly906 to Asn1059 show a composition bias toward low complexity. Residues Ser1062–Asp1078 show a composition bias toward polar residues. Low complexity predominate over residues Pro1094 to Ala1114. Residues Ile1122 to Val1142 traverse the membrane as a helical segment. Residue Ile1143 is a topological domain, cytoplasmic.

Its subcellular location is the membrane. This is an uncharacterized protein from Dictyostelium discoideum (Social amoeba).